Consider the following 128-residue polypeptide: Sulfurtransferase TusD (128 aa).

The Cysteine persulfide intermediate role is filled by C78.

This sequence belongs to the DsrE/TusD family. As to quaternary structure, heterohexamer, formed by a dimer of trimers. The hexameric TusBCD complex contains 2 copies each of TusB, TusC and TusD. The TusBCD complex interacts with TusE.

The protein localises to the cytoplasm. Its function is as follows. Part of a sulfur-relay system required for 2-thiolation of 5-methylaminomethyl-2-thiouridine (mnm(5)s(2)U) at tRNA wobble positions. Accepts sulfur from TusA and transfers it in turn to TusE. The protein is Sulfurtransferase TusD of Shigella boydii serotype 18 (strain CDC 3083-94 / BS512).